We begin with the raw amino-acid sequence, 512 residues long: Cytochrome P450 72A13 (512 aa).

The helical transmembrane segment at 2-22 threads the bilayer; it reads EISVASVTVSVAVVVVSWWVW. Position 460 (cysteine 460) interacts with heme.

This sequence belongs to the cytochrome P450 family. Heme serves as cofactor.

The protein resides in the membrane. The protein is Cytochrome P450 72A13 (CYP72A13) of Arabidopsis thaliana (Mouse-ear cress).